Consider the following 336-residue polypeptide: Dihydroorotate dehydrogenase (quinone) (336 aa).

FMN contacts are provided by residues 62-66 and T86; that span reads AGLDK. K66 serves as a coordination point for substrate. 111 to 115 serves as a coordination point for substrate; that stretch reads NRMGF. N139 and N172 together coordinate FMN. N172 lines the substrate pocket. S175 (nucleophile) is an active-site residue. N177 is a substrate binding site. K217 and T245 together coordinate FMN. 246-247 lines the substrate pocket; the sequence is NT. Residues G268, G297, and 318 to 319 each bind FMN; that span reads YS.

Belongs to the dihydroorotate dehydrogenase family. Type 2 subfamily. Monomer. Requires FMN as cofactor.

It is found in the cell membrane. It carries out the reaction (S)-dihydroorotate + a quinone = orotate + a quinol. The protein operates within pyrimidine metabolism; UMP biosynthesis via de novo pathway; orotate from (S)-dihydroorotate (quinone route): step 1/1. Its function is as follows. Catalyzes the conversion of dihydroorotate to orotate with quinone as electron acceptor. This Enterobacter sp. (strain 638) protein is Dihydroorotate dehydrogenase (quinone).